The primary structure comprises 726 residues: Catalase-peroxidase (726 aa).

Residues M1–T33 form a disordered region. The segment at residues W105 to Y226 is a cross-link (tryptophyl-tyrosyl-methioninium (Trp-Tyr) (with M-252)). Residue H106 is the Proton acceptor of the active site. A cross-link (tryptophyl-tyrosyl-methioninium (Tyr-Met) (with W-105)) is located at residues Y226–M252. Residue H267 coordinates heme b.

The protein belongs to the peroxidase family. Peroxidase/catalase subfamily. Homodimer or homotetramer. Heme b is required as a cofactor. In terms of processing, formation of the three residue Trp-Tyr-Met cross-link is important for the catalase, but not the peroxidase activity of the enzyme.

It catalyses the reaction H2O2 + AH2 = A + 2 H2O. It carries out the reaction 2 H2O2 = O2 + 2 H2O. Functionally, bifunctional enzyme with both catalase and broad-spectrum peroxidase activity. The sequence is that of Catalase-peroxidase from Shigella boydii serotype 4 (strain Sb227).